We begin with the raw amino-acid sequence, 648 residues long: MFALDSIVGKHINYALDKTQHLPNKIMNNITNTEITLQDYQYFVSRIFIGLKNLNSMLLFWDTGMGKTLTAVYIIKYIKELFPRWIILIFIKKSLYIDPWLNTIRSYISDTSNIKFIYYDSSSSLDKFNNIYRSIESSLNKKSRLLIIIDEVHKLISRTVKKDNNERNFTPIYKKLIKLANFENNKILCMSATPVTNNISEFNNLIGLLRPNVMNIKEEYINNGKLINFKELRETLLAICSYKRLIEADSLTETNYIDGYAKKNIFYHNIIMSDEQSKLYNMAEKYDYKTELGGLKTMRRLISSFAFYDLKIKGDLDNIEYNDMIKRKLAEFSEFTKNINFSESFIESFKNDNIKIKTNLPITDINNYNILYQYSCKYIETCKIILNSRGKVLIFEPLVNFEGISSLKCYFNCFNISYIEYSSKTLKTRDNELNEYNNYENNNGKKVKVCIFSYAGSEGISFKCINDIIILDMPWNESELKQIIGRSIRLNSHKDLPQEYRYVNVHFLISYTNNRKSVDKEILDIIKDKQGKINVIFDLLKSSSIESIHNTYKYIEPAENEIIFDTIRKTRMKEMNVSNVIINIKLYPISYCKDYDRATILKGLLNKDTNIVYKDNTAVAKLMIDKDNIPIFIIENDTLIYIADDYYE.

The region spanning 48 to 212 is the Helicase ATP-binding domain; the sequence is FIGLKNLNSM…NNLIGLLRPN (165 aa). 61 to 68 contributes to the ATP binding site; the sequence is WDTGMGKT. The DEXH box motif lies at 150 to 153; it reads DEVH. The 164-residue stretch at 378–541 folds into the Helicase C-terminal domain; that stretch reads YIETCKIILN…KINVIFDLLK (164 aa). Positions 467-533 are binding to the cap-specific mRNA (nucleoside-2'-O-)-methyltransferase; sequence DIIILDMPWN…DIIKDKQGKI (67 aa).

It belongs to the helicase family. NPH I subfamily. In terms of assembly, monomer. Interacts (via C-terminus) with RAP94 (via N-terminus). Interacts with the cap-specific mRNA (nucleoside-2'-O-)-methyltransferase.

It localises to the virion. It catalyses the reaction a ribonucleoside 5'-triphosphate + H2O = a ribonucleoside 5'-diphosphate + phosphate + H(+). Its function is as follows. DNA-dependent ATPase required for providing the needed energy to achieve the termination of early transcripts. Acts in concert with the RAP94 subunit of the virion RNA polymerase and the capping enzyme/VTF to catalyze release of UUUUUNU-containing nascent RNA from the elongation complex. NPH-I must bind ssDNA in order to exhibit ATPase activity. This Amsacta (AmEPV) protein is Nucleoside triphosphatase I (NPH1).